The sequence spans 321 residues: Biotin synthase (321 aa).

The Radical SAM core domain maps to 45–271; the sequence is YYGKKVKLNM…INPTKEIRIA (227 aa). [4Fe-4S] cluster-binding residues include cysteine 63, cysteine 67, and cysteine 70. The [2Fe-2S] cluster site is built by cysteine 106, cysteine 139, cysteine 199, and arginine 269.

It belongs to the radical SAM superfamily. Biotin synthase family. In terms of assembly, homodimer. The cofactor is [4Fe-4S] cluster. It depends on [2Fe-2S] cluster as a cofactor.

It carries out the reaction (4R,5S)-dethiobiotin + (sulfur carrier)-SH + 2 reduced [2Fe-2S]-[ferredoxin] + 2 S-adenosyl-L-methionine = (sulfur carrier)-H + biotin + 2 5'-deoxyadenosine + 2 L-methionine + 2 oxidized [2Fe-2S]-[ferredoxin]. The protein operates within cofactor biosynthesis; biotin biosynthesis; biotin from 7,8-diaminononanoate: step 2/2. Catalyzes the conversion of dethiobiotin (DTB) to biotin by the insertion of a sulfur atom into dethiobiotin via a radical-based mechanism. This chain is Biotin synthase, found in Staphylococcus epidermidis (strain ATCC 35984 / DSM 28319 / BCRC 17069 / CCUG 31568 / BM 3577 / RP62A).